A 328-amino-acid chain; its full sequence is Biotin synthase (328 aa).

A Radical SAM core domain is found at Asn-43 to Arg-272. [4Fe-4S] cluster-binding residues include Cys-58, Cys-62, and Cys-65. 4 residues coordinate [2Fe-2S] cluster: Cys-103, Cys-135, Cys-195, and Arg-267.

The protein belongs to the radical SAM superfamily. Biotin synthase family. Homodimer. Requires [4Fe-4S] cluster as cofactor. [2Fe-2S] cluster is required as a cofactor.

It catalyses the reaction (4R,5S)-dethiobiotin + (sulfur carrier)-SH + 2 reduced [2Fe-2S]-[ferredoxin] + 2 S-adenosyl-L-methionine = (sulfur carrier)-H + biotin + 2 5'-deoxyadenosine + 2 L-methionine + 2 oxidized [2Fe-2S]-[ferredoxin]. It participates in cofactor biosynthesis; biotin biosynthesis; biotin from 7,8-diaminononanoate: step 2/2. Catalyzes the conversion of dethiobiotin (DTB) to biotin by the insertion of a sulfur atom into dethiobiotin via a radical-based mechanism. The polypeptide is Biotin synthase (Allorhizobium ampelinum (strain ATCC BAA-846 / DSM 112012 / S4) (Agrobacterium vitis (strain S4))).